We begin with the raw amino-acid sequence, 432 residues long: N-acylneuraminate cytidylyltransferase (432 aa).

The substrate site is built by Arg-39, Asn-49, Arg-98, Ser-107, Ser-109, and Gln-130. The active site involves Arg-188.

Belongs to the CMP-NeuNAc synthase family. In terms of assembly, homotetramer; the active enzyme is formed by a dimer of dimers. As to expression, expressed in testis, ovary and liver.

It is found in the nucleus. The catalysed reaction is an N-acylneuraminate + CTP = a CMP-N-acyl-beta-neuraminate + diphosphate. Its pathway is amino-sugar metabolism; N-acetylneuraminate metabolism. In terms of biological role, catalyzes the activation of N-acetylneuraminic acid (NeuNAc) to cytidine 5'-monophosphate N-acetylneuraminic acid (CMP-NeuNAc), a substrate required for the addition of sialic acid. The polypeptide is N-acylneuraminate cytidylyltransferase (cmas) (Oncorhynchus mykiss (Rainbow trout)).